Consider the following 822-residue polypeptide: MQDKNLVNVNLTKEMKASFIDYAMSVIVARALPDVRDGLKPVHRRILYGMNELGVTPDKPHKKSARITGDVMGKYHPHGDSSIYEAMVRMAQWWSYRYMLVDGHGNFGSMDGDSAAAQRYTEARMSKIALEMLRDINKNTVDFVDNYDANEREPLVLPARFPNLLVNGATGIAVGMATNIPPHNLGETIDAVKLVMDNPEVTTKDLMEVLPGPDFPTGALVMGKSGIHKAYETGKGSIVLRSRTEIETTKTGRERIVVTEFPYMVNKTKVHEHIVRLVQEKRIEGITAVRDESNREGVRFVIEVKRDASANVILNNLFKMTQMQTNFGFNMLAIQNGIPKILSLRQILDAYIEHQKEVVVRRTRFDKEKAEARAHILEGLLIALDHIDEVIRIIRASETDAEAQAELMSKFKLSERQSQAILDMRLRRLTGLERDKIQSEYDDLLALIADLADILAKPERVSQIIKDELDEVKRKFSDKRRTELMIGQVLSLEDEDLIEESDVLITLSNRGYIKRLDQDEFTAQKRGGRGVQGTGVKDDDFVRELVSTSTHDHLLFFTNKGRVYRLKGYEIPEYGRTAKGLPVVNLLKLDEDESIQTVINVESDRSDDAYLFFTTRHGIVKRTSVKEFANIRQNGLKALNLKDEDELINVLLAEGDMDIIIGTKFGYAVRFNQSAVRGMSRIATGVKGVNLREGDTVVGASLITDQDEVLIITEKGYGKRTVATEYPTKGRGGKGMQTAKITEKNGLLAGLMTVQGDEDLMIITDTGVMIRTNLANISQTGRATMGVKVMRLDQDAQIVTFTTVAVAEKEEVGTENETEGEA.

Residues 32–497 form the Topo IIA-type catalytic domain; sequence LPDVRDGLKP…QVLSLEDEDL (466 aa). Tyrosine 120 functions as the O-(5'-phospho-DNA)-tyrosine intermediate in the catalytic mechanism. Residues 524–530 carry the GyrA-box motif; the sequence is QKRGGRG.

The protein belongs to the type II topoisomerase GyrA/ParC subunit family. In terms of assembly, heterotetramer, composed of two GyrA and two GyrB chains. In the heterotetramer, GyrA contains the active site tyrosine that forms a transient covalent intermediate with DNA, while GyrB binds cofactors and catalyzes ATP hydrolysis.

The protein resides in the cytoplasm. It carries out the reaction ATP-dependent breakage, passage and rejoining of double-stranded DNA.. In terms of biological role, a type II topoisomerase that negatively supercoils closed circular double-stranded (ds) DNA in an ATP-dependent manner to modulate DNA topology and maintain chromosomes in an underwound state. Negative supercoiling favors strand separation, and DNA replication, transcription, recombination and repair, all of which involve strand separation. Also able to catalyze the interconversion of other topological isomers of dsDNA rings, including catenanes and knotted rings. Type II topoisomerases break and join 2 DNA strands simultaneously in an ATP-dependent manner. The sequence is that of DNA gyrase subunit A from Streptococcus pneumoniae serotype 4 (strain ATCC BAA-334 / TIGR4).